The sequence spans 723 residues: Cyclin-T2 (723 aa).

The interval 1-298 (MASGRGASSR…SVTGVPANPS (298 aa)) is interaction with MDFIC and MDFI. The region spanning 12–147 (FFTREQLENT…IMLQTLGFEI (136 aa)) is the Cyclin N-terminal domain. Residues 250-298 (RLKRIRNWRAMAKKPKVDGQVSETPLLGSSLVQNSILVDSVTGVPANPS) are interaction with POLR2A. Composition is skewed to polar residues over residues 297 to 307 (PSFQKPSTSTF) and 314 to 325 (NSGSTSVQDSRA). Disordered regions lie at residues 297-325 (PSFQKPSTSTFPAPIPLNSGSTSVQDSRA), 340-364 (SYSLSSHQEWPQHPDSARTDPVYTQ), 385-428 (ALHS…GMLP), and 458-645 (AEQQ…SSVK). Basic and acidic residues predominate over residues 395 to 409 (DKVADHSSAKQEYTH). Lys404 participates in a covalent cross-link: Glycyl lysine isopeptide (Lys-Gly) (interchain with G-Cter in SUMO2). Residue Ser477 is modified to Phosphoserine. Basic and acidic residues-rich tracts occupy residues 489–503 (DRPEKHVAEKKERSG), 517–543 (GPSKEELKMKIKVASSERHSSSDEGSG), and 552–565 (ISRDHKEKHKEHPA). The segment covering 566–576 (NRHHSSHKYLH) has biased composition (basic residues). Ser596 is subject to Phosphoserine. Low complexity predominate over residues 631-645 (SSKSAGSSSSSSSVK).

This sequence belongs to the cyclin family. Cyclin C subfamily. As to quaternary structure, interacts with CDK9 to form P-TEFb. Interacts with POLR2A (via the C-terminal domain (CTD)); mediates transcriptional activity. Interacts with HEXIM1; mediates formation of a tripartite complex with KPNA2. Interacts with HEXIM2. Interacts with PKN1; enhances MYOD1-dependent transcription. P-TEFB complex interacts with RB1; promotes phosphorylation of RB1. P-TEFB complex interacts with MYOD1; promotes the transcriptional activity of MYOD1 through its CDK9-mediated phosphorylation. Interacts with MDFI and MDFIC. In terms of tissue distribution, highly expressed in all phases of skeletal muscle differentiation, particularly in later stages. Highly expressed in skeletal muscle. Significantly expressed in heart, brain, kidney, liver, testis, and pancreas.

Its subcellular location is the cytoplasm. The protein resides in the perinuclear region. The protein localises to the nucleus. Functionally, regulatory subunit of the cyclin-dependent kinase pair (CDK9/cyclin T) complex, also called positive transcription elongation factor B (P-TEFB), which is proposed to facilitate the transition from abortive to production elongation by phosphorylating the CTD (carboxy-terminal domain) of the large subunit of RNA polymerase II (RNAP II). The activity of this complex is regulated by binding with 7SK snRNA. Plays a role during muscle differentiation; P-TEFB complex interacts with MYOD1; this tripartite complex promotes the transcriptional activity of MYOD1 through its CDK9-mediated phosphorylation and binds the chromatin of promoters and enhancers of muscle-specific genes; this event correlates with hyperphosphorylation of the CTD domain of RNA pol II. In addition, enhances MYOD1-dependent transcription through interaction with PKN1. Involved in early embryo development. This Mus musculus (Mouse) protein is Cyclin-T2.